The sequence spans 78 residues: Translation initiation factor IF-1, chloroplastic (78 aa).

Positions 1 to 72 constitute an S1-like domain; that stretch reads MEKQKLIDME…TKGRITYRLR (72 aa).

The protein belongs to the IF-1 family. As to quaternary structure, component of the 30S ribosomal translation pre-initiation complex which assembles on the 30S ribosome in the order IF-2 and IF-3, IF-1 and N-formylmethionyl-tRNA(fMet); mRNA recruitment can occur at any time during PIC assembly.

Its subcellular location is the plastid. It is found in the chloroplast. One of the essential components for the initiation of protein synthesis. Stabilizes the binding of IF-2 and IF-3 on the 30S subunit to which N-formylmethionyl-tRNA(fMet) subsequently binds. Helps modulate mRNA selection, yielding the 30S pre-initiation complex (PIC). Upon addition of the 50S ribosomal subunit IF-1, IF-2 and IF-3 are released leaving the mature 70S translation initiation complex. The polypeptide is Translation initiation factor IF-1, chloroplastic (Marchantia polymorpha (Common liverwort)).